Here is a 561-residue protein sequence, read N- to C-terminus: Centromere protein T (561 aa).

The interval 1 to 78 (MADHNPDGDP…IGRSAHVQAR (78 aa)) is disordered. Residues 18–27 (RVLDTADPRT) are compositionally biased toward basic and acidic residues. Over residues 45–57 (TASSRRLSGQTKT) the composition is skewed to polar residues. Ser-47 is subject to Phosphoserine. A Phosphothreonine modification is found at Thr-85. Residues 93 to 421 (ILLTAPESSI…RHHQFPEPAP (329 aa)) form a flexible stalk domain region. Disordered stretches follow at residues 114–134 (APQV…ELQL), 256–293 (HSLP…GKPA), and 314–457 (SSGV…DPHK). Positions 276-289 (RTQSSGPGLQNNSP) are enriched in polar residues. Residues 329–341 (GVEEAEKKMKEEG) show a composition bias toward basic and acidic residues. Phosphoserine is present on residues Ser-343, Ser-345, Ser-356, Ser-373, Ser-385, Ser-386, and Ser-397. The span at 365–376 (TQVTEAEGSQGT) shows a compositional bias: polar residues. Over residues 439-450 (RCPPRSRTTGPR) the composition is skewed to low complexity.

It belongs to the CENP-T/CNN1 family. In terms of assembly, component of the CENPA-CAD complex, composed of CENPI, CENPK, CENPL, CENPO, CENPP, CENPQ, CENPR and CENPS. The CENPA-CAD complex is probably recruited on centromeres by the CENPA-NAC complex, at least composed of CENPA, CENPC, CENPH, CENPM, CENPN, CENPT and CENPU. Identified in a centromeric complex containing histones H2A, H2B, H3 and H4, and at least CENPA, CENPB, CENPC, CENPT, CENPN, HJURP, SUPT16H, SSRP1 and RSF1. Interacts (via N-terminus) with the NDC80 complex. Heterodimer with CENPW; this dimer coassembles with CENPS-CENPX heterodimers at centromeres to form the tetrameric CENP-T-W-S-X complex. Dynamically phosphorylated during the cell cycle. Phosphorylated during G2 phase, metaphase and anaphase, but not during telophase or G1 phase.

The protein localises to the nucleus. It is found in the chromosome. It localises to the centromere. Its subcellular location is the kinetochore. Its function is as follows. Component of the CENPA-NAC (nucleosome-associated) complex, a complex that plays a central role in assembly of kinetochore proteins, mitotic progression and chromosome segregation. The CENPA-NAC complex recruits the CENPA-CAD (nucleosome distal) complex and may be involved in incorporation of newly synthesized CENPA into centromeres. Part of a nucleosome-associated complex that binds specifically to histone H3-containing nucleosomes at the centromere, as opposed to nucleosomes containing CENPA. Component of the heterotetrameric CENP-T-W-S-X complex that binds and supercoils DNA, and plays an important role in kinetochore assembly. CENPT has a fundamental role in kinetochore assembly and function. It is one of the inner kinetochore proteins, with most further proteins binding downstream. Required for normal chromosome organization and normal progress through mitosis. The sequence is that of Centromere protein T (CENPT) from Macaca fascicularis (Crab-eating macaque).